The chain runs to 486 residues: Glycogen synthase (486 aa).

K20 lines the ADP-alpha-D-glucose pocket.

The protein belongs to the glycosyltransferase 1 family. Bacterial/plant glycogen synthase subfamily.

It carries out the reaction [(1-&gt;4)-alpha-D-glucosyl](n) + ADP-alpha-D-glucose = [(1-&gt;4)-alpha-D-glucosyl](n+1) + ADP + H(+). It participates in glycan biosynthesis; glycogen biosynthesis. Its function is as follows. Synthesizes alpha-1,4-glucan chains using ADP-glucose. This is Glycogen synthase from Aeromonas hydrophila subsp. hydrophila (strain ATCC 7966 / DSM 30187 / BCRC 13018 / CCUG 14551 / JCM 1027 / KCTC 2358 / NCIMB 9240 / NCTC 8049).